A 360-amino-acid chain; its full sequence is Peptide chain release factor 1 (360 aa).

At Q235 the chain carries N5-methylglutamine. The segment at 285–304 (KRQQEEASTRRNLLGSGDRS) is disordered.

Belongs to the prokaryotic/mitochondrial release factor family. In terms of processing, methylated by PrmC. Methylation increases the termination efficiency of RF1.

It localises to the cytoplasm. In terms of biological role, peptide chain release factor 1 directs the termination of translation in response to the peptide chain termination codons UAG and UAA. This is Peptide chain release factor 1 from Edwardsiella ictaluri (strain 93-146).